Consider the following 342-residue polypeptide: Platelet-activating factor receptor (342 aa).

Residues 1-16 (MELNSSSRVDSEFRYT) lie on the Extracellular side of the membrane. Asn-4 carries an N-linked (GlcNAc...) asparagine glycan. Residues 17 to 38 (LFPIVYSIIFVLGIIANGYVLW) form a helical membrane-spanning segment. Topologically, residues 39 to 54 (VFARLYPSKKLNEIKI) are cytoplasmic. Residues 55–74 (FMVNLTVADLLFLITLPLWI) form a helical membrane-spanning segment. Over 75 to 91 (VYYSNQGNWFLPKFLCN) the chain is Extracellular. Cys-90 and Cys-173 are oxidised to a cystine. A helical membrane pass occupies residues 92–113 (LAGCLFFINTYCSVAFLGVITY). Residues 114–133 (NRFQAVKYPIKTAQATTRKR) are Cytoplasmic-facing. Residues 134 to 155 (GIALSLVIWVAIVAAASYFLVM) form a helical membrane-spanning segment. The Extracellular portion of the chain corresponds to 156-184 (DSTNVVSNKAGSGNITRCFEHYEKGSKPV). Asn-169 is a glycosylation site (N-linked (GlcNAc...) asparagine). The helical transmembrane segment at 185–205 (LIIHICIVLGFFIVFLLILFC) threads the bilayer. At 206 to 233 (NLVIIHTLLRQPVKQQRNAEVRRRALWM) the chain is on the cytoplasmic side. The helical transmembrane segment at 234–254 (VCTVLAVFVICFVPHHMVQLP) threads the bilayer. Topologically, residues 255-276 (WTLAELGMWPSSNHQAINDAHQ) are extracellular. Residues 277-296 (VTLCLLSTNCVLDPVIYCFL) form a helical membrane-spanning segment. Over 297–342 (TKKFRKHLSEKLNIMRSSQKCSRVTTDTGTEMAIPINHTPVNPIKN) the chain is Cytoplasmic.

It belongs to the G-protein coupled receptor 1 family. As to quaternary structure, interacts with ARRB1.

The protein resides in the cell membrane. Its function is as follows. Receptor for platelet activating factor, a chemotactic phospholipid mediator that possesses potent inflammatory, smooth-muscle contractile and hypotensive activity. Seems to mediate its action via a G protein that activates a phosphatidylinositol-calcium second messenger system. This chain is Platelet-activating factor receptor (PTAFR), found in Cavia porcellus (Guinea pig).